The primary structure comprises 555 residues: GMP synthase [glutamine-hydrolyzing] (555 aa).

Residues 8–234 (KILVLNFGSQ…AYNICKCKKQ (227 aa)) form the Glutamine amidotransferase type-1 domain. Residue cysteine 89 is the Nucleophile; for GATase activity of the active site. The L-glutamine site is built by glutamine 93, asparagine 169, aspartate 172, and histidine 208. Active-site for GATase activity residues include histidine 208 and glutamate 210. A GMPS ATP-PPase domain is found at 235–430 (FDPIRYHELE…LNLPEEITNR (196 aa)). 262 to 268 (SGGIDST) serves as a coordination point for ATP. The XMP site is built by arginine 336, glutamine 476, lysine 547, isoleucine 552, and glutamate 553.

As to quaternary structure, homodimer (via the GMPS ATP-PPase domain). Mg(2+) is required as a cofactor.

The enzyme catalyses XMP + L-glutamine + ATP + H2O = GMP + L-glutamate + AMP + diphosphate + 2 H(+). It participates in purine metabolism; GMP biosynthesis; GMP from XMP (L-Gln route): step 1/1. Its activity is regulated as follows. The GATase domain is allosterically activated by the binding of substrates, ATP and XMP, to the ATPPase domain, thus ensuring that glutamine hydrolysis occurs only when the ATPPase domain is primed to receive ammonia. Inhibited by Na(+). Inhibited by the reaction product GMP. Functionally, catalyzes the conversion of xanthine monophosphate (XMP) to GMP in the presence of glutamine and ATP through an adenyl-XMP intermediate, which is the final step of de novo synthesis of GMP. The conversion of XMP to GMP involves the coordinated action of the glutamine amidotransferase (GATase) domain that catalyzes the hydrolysis of the amide side chain of glutamine producing ammonia and the ATP pyrophosphatase (ATPPase) domain that catalyzes the synthesis of adenyl-XMP intermediate from ATP. The ammonia produced by the GATase domain is tunnelled to the ATP-PPase domain where it attacks the adenyl-XMP intermediate generating GMP. This Plasmodium falciparum (isolate 3D7) protein is GMP synthase [glutamine-hydrolyzing].